We begin with the raw amino-acid sequence, 360 residues long: Methionine import ATP-binding protein MetN (360 aa).

Positions methionine 1–glycine 22 are disordered. In terms of domain architecture, ABC transporter spans valine 25–valine 265. Residue glycine 62–serine 69 coordinates ATP.

Belongs to the ABC transporter superfamily. Methionine importer (TC 3.A.1.24) family. As to quaternary structure, the complex is composed of two ATP-binding proteins (MetN), two transmembrane proteins (MetI) and a solute-binding protein (MetQ).

The protein localises to the cell membrane. It carries out the reaction L-methionine(out) + ATP + H2O = L-methionine(in) + ADP + phosphate + H(+). It catalyses the reaction D-methionine(out) + ATP + H2O = D-methionine(in) + ADP + phosphate + H(+). Part of the ABC transporter complex MetNIQ involved in methionine import. Responsible for energy coupling to the transport system. This is Methionine import ATP-binding protein MetN from Corynebacterium glutamicum (strain ATCC 13032 / DSM 20300 / JCM 1318 / BCRC 11384 / CCUG 27702 / LMG 3730 / NBRC 12168 / NCIMB 10025 / NRRL B-2784 / 534).